Here is a 318-residue protein sequence, read N- to C-terminus: Acetyl-coenzyme A carboxylase carboxyl transferase subunit alpha (318 aa).

One can recognise a CoA carboxyltransferase C-terminal domain in the interval 38–292 (KLEKRLAKLE…NKTITKSLHA (255 aa)).

Belongs to the AccA family. As to quaternary structure, acetyl-CoA carboxylase is a heterohexamer composed of biotin carboxyl carrier protein (AccB), biotin carboxylase (AccC) and two subunits each of ACCase subunit alpha (AccA) and ACCase subunit beta (AccD).

It localises to the cytoplasm. The enzyme catalyses N(6)-carboxybiotinyl-L-lysyl-[protein] + acetyl-CoA = N(6)-biotinyl-L-lysyl-[protein] + malonyl-CoA. Its pathway is lipid metabolism; malonyl-CoA biosynthesis; malonyl-CoA from acetyl-CoA: step 1/1. Functionally, component of the acetyl coenzyme A carboxylase (ACC) complex. First, biotin carboxylase catalyzes the carboxylation of biotin on its carrier protein (BCCP) and then the CO(2) group is transferred by the carboxyltransferase to acetyl-CoA to form malonyl-CoA. The sequence is that of Acetyl-coenzyme A carboxylase carboxyl transferase subunit alpha from Listeria monocytogenes serotype 4b (strain CLIP80459).